The chain runs to 476 residues: Siroheme synthase (476 aa).

The tract at residues M1–L203 is precorrin-2 dehydrogenase /sirohydrochlorin ferrochelatase. NAD(+) is bound by residues G22–V23 and Q43–K44. S128 is subject to Phosphoserine. Positions G214–A476 are uroporphyrinogen-III C-methyltransferase. Residue P223 participates in S-adenosyl-L-methionine binding. The active-site Proton acceptor is the D246. Residue K268 is the Proton donor of the active site. Residues G299–D301, V304, T329–A330, M381, and G410 each bind S-adenosyl-L-methionine.

It in the N-terminal section; belongs to the precorrin-2 dehydrogenase / sirohydrochlorin ferrochelatase family. In the C-terminal section; belongs to the precorrin methyltransferase family.

It catalyses the reaction uroporphyrinogen III + 2 S-adenosyl-L-methionine = precorrin-2 + 2 S-adenosyl-L-homocysteine + H(+). The catalysed reaction is precorrin-2 + NAD(+) = sirohydrochlorin + NADH + 2 H(+). It carries out the reaction siroheme + 2 H(+) = sirohydrochlorin + Fe(2+). It participates in cofactor biosynthesis; adenosylcobalamin biosynthesis; precorrin-2 from uroporphyrinogen III: step 1/1. The protein operates within cofactor biosynthesis; adenosylcobalamin biosynthesis; sirohydrochlorin from precorrin-2: step 1/1. It functions in the pathway porphyrin-containing compound metabolism; siroheme biosynthesis; precorrin-2 from uroporphyrinogen III: step 1/1. Its pathway is porphyrin-containing compound metabolism; siroheme biosynthesis; siroheme from sirohydrochlorin: step 1/1. It participates in porphyrin-containing compound metabolism; siroheme biosynthesis; sirohydrochlorin from precorrin-2: step 1/1. Multifunctional enzyme that catalyzes the SAM-dependent methylations of uroporphyrinogen III at position C-2 and C-7 to form precorrin-2 via precorrin-1. Then it catalyzes the NAD-dependent ring dehydrogenation of precorrin-2 to yield sirohydrochlorin. Finally, it catalyzes the ferrochelation of sirohydrochlorin to yield siroheme. This Actinobacillus succinogenes (strain ATCC 55618 / DSM 22257 / CCUG 43843 / 130Z) protein is Siroheme synthase.